We begin with the raw amino-acid sequence, 892 residues long: Iodate reductase subunit IdrA (892 aa).

Residues C27, C30, and C34 each contribute to the [3Fe-4S] cluster site. Residues 431–442 are compositionally biased toward gly residues; that stretch reads RGGGHQRGGLSA. The segment at 431–452 is disordered; it reads RGGGHQRGGLSAGGNSEWLSPE.

The protein belongs to the prokaryotic molybdopterin-containing oxidoreductase family. The iodate reductase (Idr) complex is composed of a molybdopterin-dependent iodate reductase (IdrA and IdrB subunits) and two associated peroxidases (IdrP1 and IdrP2). The cofactor is [3Fe-4S] cluster. Requires Mo-bis(molybdopterin guanine dinucleotide) as cofactor.

Its subcellular location is the periplasm. Its function is as follows. Involved in iodate respiration. Probably catalyzes the reduction of iodate (IO(3)(-)) to hypoiodous acid (HIO) and H(2)O(2), using a reduced cytochrome c as the electron donor. The sequence is that of Iodate reductase subunit IdrA from Pseudomonas sp. (strain SCT).